The following is a 315-amino-acid chain: Methionyl-tRNA formyltransferase (315 aa).

113–116 (SLLP) contributes to the (6S)-5,6,7,8-tetrahydrofolate binding site.

Belongs to the Fmt family.

The catalysed reaction is L-methionyl-tRNA(fMet) + (6R)-10-formyltetrahydrofolate = N-formyl-L-methionyl-tRNA(fMet) + (6S)-5,6,7,8-tetrahydrofolate + H(+). Attaches a formyl group to the free amino group of methionyl-tRNA(fMet). The formyl group appears to play a dual role in the initiator identity of N-formylmethionyl-tRNA by promoting its recognition by IF2 and preventing the misappropriation of this tRNA by the elongation apparatus. This chain is Methionyl-tRNA formyltransferase, found in Klebsiella pneumoniae subsp. pneumoniae (strain ATCC 700721 / MGH 78578).